Reading from the N-terminus, the 430-residue chain is Serine--tRNA ligase (430 aa).

A disordered region spans residues 47–66 (AQAEQNKASKEAGAAKGRGD). Residue 231 to 233 (TSE) participates in L-serine binding. 262–264 (RSE) provides a ligand contact to ATP. Glu285 contacts L-serine. 349-352 (EISS) is a binding site for ATP. L-serine is bound at residue Ser385.

The protein belongs to the class-II aminoacyl-tRNA synthetase family. Type-1 seryl-tRNA synthetase subfamily. As to quaternary structure, homodimer. The tRNA molecule binds across the dimer.

It localises to the cytoplasm. It carries out the reaction tRNA(Ser) + L-serine + ATP = L-seryl-tRNA(Ser) + AMP + diphosphate + H(+). It catalyses the reaction tRNA(Sec) + L-serine + ATP = L-seryl-tRNA(Sec) + AMP + diphosphate + H(+). Its pathway is aminoacyl-tRNA biosynthesis; selenocysteinyl-tRNA(Sec) biosynthesis; L-seryl-tRNA(Sec) from L-serine and tRNA(Sec): step 1/1. Its function is as follows. Catalyzes the attachment of serine to tRNA(Ser). Is also able to aminoacylate tRNA(Sec) with serine, to form the misacylated tRNA L-seryl-tRNA(Sec), which will be further converted into selenocysteinyl-tRNA(Sec). The protein is Serine--tRNA ligase of Paracoccus denitrificans (strain Pd 1222).